A 146-amino-acid chain; its full sequence is 3-hydroxyacyl-[acyl-carrier-protein] dehydratase FabZ (146 aa).

Residue H48 is part of the active site.

The protein belongs to the thioester dehydratase family. FabZ subfamily.

The protein localises to the cytoplasm. It catalyses the reaction a (3R)-hydroxyacyl-[ACP] = a (2E)-enoyl-[ACP] + H2O. Involved in unsaturated fatty acids biosynthesis. Catalyzes the dehydration of short chain beta-hydroxyacyl-ACPs and long chain saturated and unsaturated beta-hydroxyacyl-ACPs. This Paracidovorax citrulli (strain AAC00-1) (Acidovorax citrulli) protein is 3-hydroxyacyl-[acyl-carrier-protein] dehydratase FabZ.